Here is a 914-residue protein sequence, read N- to C-terminus: Beta-mannosidase A (914 aa).

A signal peptide spans 1-20 (MRFTATAAALVASSIPATLG). Residues Asn39, Asn79, Asn230, Asn265, Asn299, Asn309, and Asn330 are each glycosylated (N-linked (GlcNAc...) asparagine). Glu462 functions as the Proton donor in the catalytic mechanism. Asn591, Asn614, Asn641, Asn721, Asn744, Asn773, Asn784, and Asn909 each carry an N-linked (GlcNAc...) asparagine glycan.

Belongs to the glycosyl hydrolase 2 family. Beta-mannosidase A subfamily. Homodimer.

Its subcellular location is the secreted. The enzyme catalyses Hydrolysis of terminal, non-reducing beta-D-mannose residues in beta-D-mannosides.. It functions in the pathway glycan metabolism; N-glycan degradation. Exoglycosidase that cleaves the single beta-linked mannose residue from the non-reducing end of beta-mannosidic oligosaccharides of various complexity and length. Involved in the degradation of polymeric mannan and galactomannan. The protein is Beta-mannosidase A (mndA) of Aspergillus flavus (strain ATCC 200026 / FGSC A1120 / IAM 13836 / NRRL 3357 / JCM 12722 / SRRC 167).